The following is a 354-amino-acid chain: Macrosialin (354 aa).

The N-terminal stretch at 1–21 (MRLAVLFSGALLGLLAAQGTG) is a signal peptide. Topologically, residues 22–319 (NDCPHKKSAT…QSFSCPSDRS (298 aa)) are extracellular. The segment at 23-140 (DCPHKKSATL…SPGFTSSAHP (118 aa)) is mucin-like. Residues 40-51 (PTVTESTGTTSH) show a composition bias toward low complexity. A disordered region spans residues 40 to 162 (PTVTESTGTT…SKETIGDYTW (123 aa)). A compositionally biased stretch (basic residues) spans 52–61 (RTTKSHKTTT). Residues 62–84 (HRTTTTGTTSHGPTTATHNPTTT) show a composition bias toward low complexity. A run of 2 repeats spans residues 70 to 99 (TSHG…NSTA) and 100 to 129 (TSQG…NSTA). Residues 70-129 (TSHGPTTATHNPTTTSHGNVTVHPTSNSTATSQGPSTATHSPATTSHGNATVHPTSNSTA) form a 2 X 30 AA tandem repeats region. A compositionally biased stretch (polar residues) spans 85 to 102 (SHGNVTVHPTSNSTATSQ). N-linked (GlcNAc...) asparagine glycans are attached at residues asparagine 88 and asparagine 96. The segment covering 103–117 (GPSTATHSPATTSHG) has biased composition (low complexity). N-linked (GlcNAc...) asparagine glycans are attached at residues asparagine 118 and asparagine 126. Positions 121–135 (VHPTSNSTATSPGFT) are enriched in polar residues. Pro residues predominate over residues 140-150 (PEPPPPSPSPS). Residues asparagine 164, asparagine 199, asparagine 246, asparagine 261, and asparagine 279 are each glycosylated (N-linked (GlcNAc...) asparagine). A disulfide bond links cysteine 169 and cysteine 207. Cysteine 277 and cysteine 314 are joined by a disulfide. The chain crosses the membrane as a helical span at residues 320–344 (ILLPLIIGLILLGLLALVLIAFCII). Residues 345 to 354 (RRRPSAYQAL) lie on the Cytoplasmic side of the membrane.

Belongs to the LAMP family. N- and O-glycosylated. As to expression, highly expressed by blood monocytes and tissue macrophages. Also expressed in lymphocytes, fibroblasts and endothelial cells. Expressed in many tumor cell lines which could allow them to attach to selectins on vascular endothelium, facilitating their dissemination to secondary sites.

The protein localises to the cell membrane. The protein resides in the endosome membrane. Its subcellular location is the lysosome membrane. Could play a role in phagocytic activities of tissue macrophages, both in intracellular lysosomal metabolism and extracellular cell-cell and cell-pathogen interactions. Binds to tissue- and organ-specific lectins or selectins, allowing homing of macrophage subsets to particular sites. Rapid recirculation of CD68 from endosomes and lysosomes to the plasma membrane may allow macrophages to crawl over selectin-bearing substrates or other cells. In Homo sapiens (Human), this protein is Macrosialin (CD68).